Here is a 404-residue protein sequence, read N- to C-terminus: 4-hydroxy-3-methylbut-2-en-1-yl diphosphate synthase (ferredoxin) (404 aa).

Residues C313, C316, C347, and E354 each coordinate [4Fe-4S] cluster.

The protein belongs to the IspG family. The cofactor is [4Fe-4S] cluster.

It carries out the reaction (2E)-4-hydroxy-3-methylbut-2-enyl diphosphate + 2 oxidized [2Fe-2S]-[ferredoxin] + H2O = 2-C-methyl-D-erythritol 2,4-cyclic diphosphate + 2 reduced [2Fe-2S]-[ferredoxin] + H(+). It participates in isoprenoid biosynthesis; isopentenyl diphosphate biosynthesis via DXP pathway; isopentenyl diphosphate from 1-deoxy-D-xylulose 5-phosphate: step 5/6. In terms of biological role, converts 2C-methyl-D-erythritol 2,4-cyclodiphosphate (ME-2,4cPP) into 1-hydroxy-2-methyl-2-(E)-butenyl 4-diphosphate. This Crocosphaera subtropica (strain ATCC 51142 / BH68) (Cyanothece sp. (strain ATCC 51142)) protein is 4-hydroxy-3-methylbut-2-en-1-yl diphosphate synthase (ferredoxin).